The chain runs to 290 residues: Protease HtpX (290 aa).

2 consecutive transmembrane segments (helical) span residues 4–24 and 36–56; these read IMLF…TLKL and GSLL…SLFI. Zn(2+) is bound at residue H142. E143 is a catalytic residue. H146 is a binding site for Zn(2+). A run of 2 helical transmembrane segments spans residues 150 to 170 and 193 to 213; these read GDMV…MFFA and FIAT…IVMW. E219 provides a ligand contact to Zn(2+).

Belongs to the peptidase M48B family. Zn(2+) serves as cofactor.

It is found in the cell inner membrane. The polypeptide is Protease HtpX (Ectopseudomonas mendocina (strain ymp) (Pseudomonas mendocina)).